Consider the following 149-residue polypeptide: Cyanate hydratase (149 aa).

Active-site residues include Arg-90, Glu-93, and Ser-116.

The protein belongs to the cyanase family.

It carries out the reaction cyanate + hydrogencarbonate + 3 H(+) = NH4(+) + 2 CO2. Catalyzes the reaction of cyanate with bicarbonate to produce ammonia and carbon dioxide. In Synechocystis sp. (strain ATCC 27184 / PCC 6803 / Kazusa), this protein is Cyanate hydratase.